Consider the following 172-residue polypeptide: Trypsin inhibitor DE-3 (172 aa).

Cystine bridges form between Cys39/Cys83 and Cys132/Cys139.

Belongs to the protease inhibitor I3 (leguminous Kunitz-type inhibitor) family.

Functionally, inhibition of trypsin. This chain is Trypsin inhibitor DE-3, found in Erythrina caffra (Kaffir tree).